The primary structure comprises 537 residues: MSLASVAARRASSLRASTLVRTTFNRAIASASAGDALETVVGVEIHVRLQTRSKLFSGSASAYGGEPNSRVAPFDASLPGTLPVLNAGAVALAVKLGIALEGEVQLRSAFDRKHYWYADLPHGYQITQKRSPIVLGGVVRCQGNLSGDDAGDERSTDGALKVGIERVQLEMDTGKSSVAEDGRGTLVDLNRAGQALVEIVSEPDMRSGEEAVACVEALQRMLRYLHVSDANMEEGSLRCDVNVSVRTSEERARGVFGERVEIKNLNSLRSIARAVKYEAQRHAKVLAGGGKIERETRSFDVNTGKTVVLRTKENLLDYKFTPEPDLPSLVLTSADVEAIAGRMPELPNAAYERLVSGGASPSASNTIVAFPSTLKYFDVAMENCGAAKSADVANFIANEIIGAARKDAGATHKEPLSTLPRAASARRVGELLGKVADGTLSGRMAKQVLEALMNSDERALGDIVDDICGGGQISSDDHLRDICHSVVRDKPEEVRLLQGGKSKLMGALVGEVMKRTSGRANPKDVSKLLADIVAGEP.

Belongs to the GatB/GatE family. GatB subfamily. Subunit of the heterotrimeric GatCAB amidotransferase (AdT) complex, composed of A, B and C subunits.

The protein resides in the mitochondrion. It is found in the plastid. The protein localises to the chloroplast. The catalysed reaction is L-glutamyl-tRNA(Gln) + L-glutamine + ATP + H2O = L-glutaminyl-tRNA(Gln) + L-glutamate + ADP + phosphate + H(+). Allows the formation of correctly charged Gln-tRNA(Gln) through the transamidation of misacylated Glu-tRNA(Gln) in chloroplasts and mitochondria. The reaction takes place in the presence of glutamine and ATP through an activated gamma-phospho-Glu-tRNA(Gln). The polypeptide is Glutamyl-tRNA(Gln) amidotransferase subunit B, chloroplastic/mitochondrial (Ostreococcus tauri).